Here is a 333-residue protein sequence, read N- to C-terminus: Anthranilate phosphoribosyltransferase (333 aa).

Residues Gly81, 84–85 (GD), Thr89, 91–94 (NIST), 109–117 (KHGNRSVSS), and Ala121 each bind 5-phospho-alpha-D-ribose 1-diphosphate. Gly81 contributes to the anthranilate binding site. Ser93 is a binding site for Mg(2+). Asn112 contacts anthranilate. Residue Arg167 participates in anthranilate binding. Asp225 and Glu226 together coordinate Mg(2+).

Belongs to the anthranilate phosphoribosyltransferase family. In terms of assembly, homodimer. The cofactor is Mg(2+).

It carries out the reaction N-(5-phospho-beta-D-ribosyl)anthranilate + diphosphate = 5-phospho-alpha-D-ribose 1-diphosphate + anthranilate. It participates in amino-acid biosynthesis; L-tryptophan biosynthesis; L-tryptophan from chorismate: step 2/5. Functionally, catalyzes the transfer of the phosphoribosyl group of 5-phosphorylribose-1-pyrophosphate (PRPP) to anthranilate to yield N-(5'-phosphoribosyl)-anthranilate (PRA). The protein is Anthranilate phosphoribosyltransferase of Haemophilus influenzae (strain PittGG).